We begin with the raw amino-acid sequence, 76 residues long: Conotoxin Cl6.4 (76 aa).

The N-terminal stretch at 1–19 is a signal peptide; that stretch reads MTLTFLLVVALCMLTTCHT. The propeptide occupies 20–47; the sequence is ENYRDSQKVSPVRSIGKTQFARSLRLSE. 3 disulfides stabilise this stretch: Cys50–Cys66, Cys57–Cys70, and Cys65–Cys75.

Expressed by the venom duct.

It is found in the secreted. The sequence is that of Conotoxin Cl6.4 from Californiconus californicus (California cone).